The chain runs to 360 residues: Phospho-N-acetylmuramoyl-pentapeptide-transferase (360 aa).

10 helical membrane passes run 27–47 (GATA…IAAL), 74–94 (TMGG…WANL), 99–119 (VWVV…DDYL), 135–155 (LLLE…LGTP), 165–185 (INGF…FVIV), 199–219 (GLAI…AYLA), 236–256 (AGEL…FLWF), 263–283 (IFMG…VAVA), 288–308 (IVLA…IVQV), and 337–357 (QVVV…LSTL).

The protein belongs to the glycosyltransferase 4 family. MraY subfamily. The cofactor is Mg(2+).

It is found in the cell inner membrane. The catalysed reaction is UDP-N-acetyl-alpha-D-muramoyl-L-alanyl-gamma-D-glutamyl-meso-2,6-diaminopimeloyl-D-alanyl-D-alanine + di-trans,octa-cis-undecaprenyl phosphate = di-trans,octa-cis-undecaprenyl diphospho-N-acetyl-alpha-D-muramoyl-L-alanyl-D-glutamyl-meso-2,6-diaminopimeloyl-D-alanyl-D-alanine + UMP. It participates in cell wall biogenesis; peptidoglycan biosynthesis. Its function is as follows. Catalyzes the initial step of the lipid cycle reactions in the biosynthesis of the cell wall peptidoglycan: transfers peptidoglycan precursor phospho-MurNAc-pentapeptide from UDP-MurNAc-pentapeptide onto the lipid carrier undecaprenyl phosphate, yielding undecaprenyl-pyrophosphoryl-MurNAc-pentapeptide, known as lipid I. The chain is Phospho-N-acetylmuramoyl-pentapeptide-transferase from Methylocella silvestris (strain DSM 15510 / CIP 108128 / LMG 27833 / NCIMB 13906 / BL2).